The sequence spans 142 residues: Large ribosomal subunit protein uL13 (142 aa).

It belongs to the universal ribosomal protein uL13 family. As to quaternary structure, part of the 50S ribosomal subunit.

This protein is one of the early assembly proteins of the 50S ribosomal subunit, although it is not seen to bind rRNA by itself. It is important during the early stages of 50S assembly. The sequence is that of Large ribosomal subunit protein uL13 from Koribacter versatilis (strain Ellin345).